The chain runs to 1038 residues: MASESVKVVVRCRPMNKRERELSCQSVVTVDSARGQCFIQNPGAADEPPKQFTFDGAYYIEHFTEQIYNEIAYPLVEGVTEGYNGTIFAYGQTGSGKSFTMQGLPDPPCQRGIIPRAFEHVFESVQCAENTKFLVRASYLEIYNEDVHDLLGADTKQRLELKEHPEKGVYVKGLSMHTVHNVAQCERVMETGWKNRAVGYTLMNKDSSRSHSIFTINIEIYAVDERGKDHLRAGKLNLVDLAGSERQSKTGATGERLKEATKINLSLSALGNVISALVDGRCKHIPYRDSKLTRLLQDSLGGNTKTLMVACLSPADNNYDETLSTLRYANRAKNIKNKPRINEDPKDALLREYQEEIKRLKAILAQQMGPGNLSALLSTQTPPGPVQSEEKLLSPTTVQQDTEAEKQLIREEYEERLARLKADYEAEQESRVRLQEDITAMRNSYDVKLSTLQENLRKEKETEAILKAEVLCKTEVMSRAELASGPEYSPPLQYETAVKPTILSMPDMPPSGKVTKSQAPLAFEEPHGETSRSEFSFESNECSTLEDSATSEAFPGPEEFSNMEFSMAAALTESRYLPEEYLGGQEAAASPLEAERYVQENEPSLEPLRILASLQDPFAEVEAKLARLSSTVAMSDSSQTVVPQIPKQPSSADLLEPSDTKSEADVAVADNVVLGTEPDVNLRVAEEVVSEAETGVWMESEAQVAHVAQVSEEAQPQPLLAMVSVRRESVGVEVAVLTEEELQPVDQQQVLARLQLLEQQVVGGEQAKNKDLREKHKRRKRYADERKKQLVAALQNSDEDGGDWVLLNVYDSIQEEVRAKSKLLEKMQRKLRAAEVEIKDLQSEFQLEKIDYLATIRRQERDSMLFQQLLEQVQPLIRRDCNYSNLEKIRRESSWDEDNGFWKIPDPIILKTSLPVVPTGTQNKPARKTSAVDSGEPHMQEEDRYKLMLSRSDSENIASNYFRSKRASQILSTDPMKSLTYHNSPPGLNSSLSNNSALPPTQTPEMPQPRPFRLESLDIPFSKAKRKKSKNSFGGEPL.

In terms of domain architecture, Kinesin motor spans 5–335 (SVKVVVRCRP…LRYANRAKNI (331 aa)). 91 to 98 (GQTGSGKS) is a binding site for ATP. Residues 346–470 (KDALLREYQE…ETEAILKAEV (125 aa)) adopt a coiled-coil conformation. 3 disordered regions span residues 379-401 (TQTP…VQQD), 503-559 (LSMP…GPEE), and 636-657 (DSSQ…LLEP). Polar residues-rich tracts occupy residues 533 to 551 (SEFS…SATS) and 636 to 651 (DSSQ…QPSS). A coiled-coil region spans residues 748-855 (QQVLARLQLL…QLEKIDYLAT (108 aa)). Disordered stretches follow at residues 916 to 940 (VVPT…PHMQ) and 976 to 1038 (MKSL…GEPL). Low complexity predominate over residues 983–1000 (NSPPGLNSSLSNNSALPP).

Belongs to the TRAFAC class myosin-kinesin ATPase superfamily. Kinesin family. In terms of assembly, homodimer. Interacts with APBA1 (via PDZ domain); the interaction is direct and is required for association of KIF17 with the cargo that is to be transported. Interacts with IFT B complex components IFT52 and IFT57. Interacts with IFT70B. Interacts with PIWIL1. Interacts with TBATA. As to expression, highly expressed in the gray matter of the brain, especially in the hippocampus.

The protein localises to the cytoplasm. It is found in the cytoskeleton. Its subcellular location is the cell projection. The protein resides in the cilium. It localises to the dendrite. In terms of biological role, dendrite-specific motor protein which, in association with the Apba1-containing complex (LIN-10-LIN-2-LIN-7 complex), transports vesicles containing N-methyl-D-aspartate (NMDA) receptor subunit NR2B along microtubules. The protein is Kinesin-like protein KIF17 (Kif17) of Mus musculus (Mouse).